Consider the following 347-residue polypeptide: Probable cytosolic iron-sulfur protein assembly protein 1 (347 aa).

7 WD repeats span residues 11-48 (LHNE…DGLV), 62-101 (SHKK…GDAD), 122-161 (GHEN…EEYE), 168-207 (EHSQ…WEAA), 212-255 (GHEG…SIEE), 266-304 (VHGK…VWEV), and 311-347 (SHSI…WAYN).

It belongs to the WD repeat CIA1 family. As to quaternary structure, interacts with NAR1.

The protein resides in the cytoplasm. The protein localises to the nucleus. Functionally, essential component of the cytosolic iron-sulfur (Fe/S) protein assembly machinery. Required for the maturation of extramitochondrial Fe/S proteins. This is Probable cytosolic iron-sulfur protein assembly protein 1 from Vanderwaltozyma polyspora (strain ATCC 22028 / DSM 70294 / BCRC 21397 / CBS 2163 / NBRC 10782 / NRRL Y-8283 / UCD 57-17) (Kluyveromyces polysporus).